The chain runs to 82 residues: MLVLTRKLKEAIQIGDDIEITVLAIQGDQVKLGINAPKHVEIHRKEIYLAIQAENNAASHASKSSLKRLNEQLKHLKGGKQA.

This sequence belongs to the CsrA/RsmA family. In terms of assembly, homodimer; the beta-strands of each monomer intercalate to form a hydrophobic core while the alpha-helices form wings that extend away from the core. Each of the alpha-helical wings interacts with an FliW monomer, yielding a FliW-CsrA(2)-FliW complex.

The protein localises to the cytoplasm. Functionally, a translational regulator that binds mRNA to regulate translation initiation and/or mRNA stability. Usually binds in the 5'-UTR at or near the Shine-Dalgarno sequence preventing ribosome-binding, thus repressing translation. Its main target seems to be the major flagellin gene, while its function is anatagonized by FliW. This chain is Translational regulator CsrA, found in Geobacillus thermodenitrificans (strain NG80-2).